Consider the following 379-residue polypeptide: Cytochrome b (379 aa).

A run of 4 helical transmembrane segments spans residues 34 to 54, 78 to 99, 114 to 134, and 179 to 199; these read FGSLLGACLILQTITGIFLAM, WLIRNMHANGASLFFMCIYLHI, WNTGITLLLLTMATAFVGYVL, and FFTFHFLLPFTIMGMTMVHLL. 2 residues coordinate heme b: His84 and His98. His183 and His197 together coordinate heme b. Residue His202 participates in a ubiquinone binding. The next 4 helical transmembrane spans lie at 227–247, 289–309, 321–341, and 348–368; these read YKDLLGLILMLAFLLTLTLFY, LGGVLALLLSILVLFLMPTLH, LTQTLFWSFIANLMVLTWIGG, and FITIGQVASILHFLILLILMP.

This sequence belongs to the cytochrome b family. The cytochrome bc1 complex contains 3 respiratory subunits (MT-CYB, CYC1 and UQCRFS1), 2 core proteins (UQCRC1 and UQCRC2) and probably 6 low-molecular weight proteins. It depends on heme b as a cofactor.

The protein localises to the mitochondrion inner membrane. Functionally, component of the ubiquinol-cytochrome c reductase complex (complex III or cytochrome b-c1 complex) that is part of the mitochondrial respiratory chain. The b-c1 complex mediates electron transfer from ubiquinol to cytochrome c. Contributes to the generation of a proton gradient across the mitochondrial membrane that is then used for ATP synthesis. The protein is Cytochrome b (MT-CYB) of Glyptemys muhlenbergii (Bog turtle).